Here is a 132-residue protein sequence, read N- to C-terminus: MSFTDPIGDMLTRIRNASSARHEKCLVPASRLKVRIAEVLREEGFIKDFVLHEDGVQGAITIVLKYSADREPAISDIKRVSKPGLRRYVATDSIPRVLNGMGIAILSTSKGVMVDREARKQKVGGELICTVW.

It belongs to the universal ribosomal protein uS8 family. As to quaternary structure, part of the 30S ribosomal subunit. Contacts proteins S5 and S12.

One of the primary rRNA binding proteins, it binds directly to 16S rRNA central domain where it helps coordinate assembly of the platform of the 30S subunit. This is Small ribosomal subunit protein uS8 from Anaeromyxobacter dehalogenans (strain 2CP-C).